A 688-amino-acid chain; its full sequence is Potassium-transporting ATPase ATP-binding subunit (688 aa).

Transmembrane regions (helical) follow at residues Phe-37–Ile-57, Ile-65–Ile-85, Ile-219–Leu-239, and Val-262–Ile-282. Asp-313 acts as the 4-aspartylphosphate intermediate in catalysis. ATP-binding positions include Asp-350, Glu-354, Phe-383–Ser-390, and Lys-401. Residues Asp-524 and Asp-528 each coordinate Mg(2+). 3 consecutive transmembrane segments (helical) span residues Phe-594–Met-614, Ala-622–Leu-642, and Ile-668–Val-688.

It belongs to the cation transport ATPase (P-type) (TC 3.A.3) family. Type IA subfamily. As to quaternary structure, the system is composed of three essential subunits: KdpA, KdpB and KdpC.

It localises to the cell membrane. It catalyses the reaction K(+)(out) + ATP + H2O = K(+)(in) + ADP + phosphate + H(+). Functionally, part of the high-affinity ATP-driven potassium transport (or Kdp) system, which catalyzes the hydrolysis of ATP coupled with the electrogenic transport of potassium into the cytoplasm. This subunit is responsible for energy coupling to the transport system and for the release of the potassium ions to the cytoplasm. The sequence is that of Potassium-transporting ATPase ATP-binding subunit from Clostridium botulinum (strain Eklund 17B / Type B).